Reading from the N-terminus, the 126-residue chain is Large-conductance mechanosensitive channel (126 aa).

Transmembrane regions (helical) follow at residues 14-34 (VLDLAVGVIIGGAFTGIVKSL) and 69-89 (GAFLNDVINFLITAFVVFLLV).

Belongs to the MscL family. Homopentamer.

The protein localises to the cell membrane. Functionally, channel that opens in response to stretch forces in the membrane lipid bilayer. May participate in the regulation of osmotic pressure changes within the cell. This is Large-conductance mechanosensitive channel from Leuconostoc citreum (strain KM20).